Here is a 150-residue protein sequence, read N- to C-terminus: MSDFARNRKALHDFDIEETYEAGIALTGPEVKSVREGRANLRESYVRVRNGEVFLVGAHISPYKNATNVPQEPTRDRKLLLHRKEIDRLAGKSQEERKTIIPLRLYPKNGLVKLEIAVASRKRQYDKRREIAKKTAQREIERAMKERLRR.

This sequence belongs to the SmpB family.

The protein resides in the cytoplasm. Required for rescue of stalled ribosomes mediated by trans-translation. Binds to transfer-messenger RNA (tmRNA), required for stable association of tmRNA with ribosomes. tmRNA and SmpB together mimic tRNA shape, replacing the anticodon stem-loop with SmpB. tmRNA is encoded by the ssrA gene; the 2 termini fold to resemble tRNA(Ala) and it encodes a 'tag peptide', a short internal open reading frame. During trans-translation Ala-aminoacylated tmRNA acts like a tRNA, entering the A-site of stalled ribosomes, displacing the stalled mRNA. The ribosome then switches to translate the ORF on the tmRNA; the nascent peptide is terminated with the 'tag peptide' encoded by the tmRNA and targeted for degradation. The ribosome is freed to recommence translation, which seems to be the essential function of trans-translation. The polypeptide is SsrA-binding protein (Rubrobacter xylanophilus (strain DSM 9941 / JCM 11954 / NBRC 16129 / PRD-1)).